We begin with the raw amino-acid sequence, 177 residues long: Large ribosomal subunit protein uL6 (177 aa).

The protein belongs to the universal ribosomal protein uL6 family. Part of the 50S ribosomal subunit.

Functionally, this protein binds to the 23S rRNA, and is important in its secondary structure. It is located near the subunit interface in the base of the L7/L12 stalk, and near the tRNA binding site of the peptidyltransferase center. The sequence is that of Large ribosomal subunit protein uL6 from Vibrio parahaemolyticus serotype O3:K6 (strain RIMD 2210633).